Consider the following 84-residue polypeptide: Large ribosomal subunit protein bL27 (84 aa).

The disordered stretch occupies residues 1 to 24 (MAHKKAGGSSRNGRDSKGQRLGCK).

Belongs to the bacterial ribosomal protein bL27 family.

This Pelobacter propionicus (strain DSM 2379 / NBRC 103807 / OttBd1) protein is Large ribosomal subunit protein bL27.